Here is a 367-residue protein sequence, read N- to C-terminus: Glutamate 5-kinase (367 aa).

Lys-10 is a binding site for ATP. Residues Ser-50, Asp-137, and Asn-149 each contribute to the substrate site. Residues 169 to 170 (TD) and 211 to 217 (TGGMATK) contribute to the ATP site. Positions 275-353 (AGEITVDDGA…QQISEILGYE (79 aa)) constitute a PUA domain.

The protein belongs to the glutamate 5-kinase family.

The protein localises to the cytoplasm. The catalysed reaction is L-glutamate + ATP = L-glutamyl 5-phosphate + ADP. It functions in the pathway amino-acid biosynthesis; L-proline biosynthesis; L-glutamate 5-semialdehyde from L-glutamate: step 1/2. Catalyzes the transfer of a phosphate group to glutamate to form L-glutamate 5-phosphate. This is Glutamate 5-kinase from Yersinia enterocolitica serotype O:8 / biotype 1B (strain NCTC 13174 / 8081).